A 60-amino-acid chain; its full sequence is Large ribosomal subunit protein bL32 (60 aa).

Belongs to the bacterial ribosomal protein bL32 family.

This Moorella thermoacetica (strain ATCC 39073 / JCM 9320) protein is Large ribosomal subunit protein bL32.